Reading from the N-terminus, the 1426-residue chain is Homeobox protein cut-like 2 (1426 aa).

A disordered region spans residues 77 to 104 (PEPPSAREQNEGTCPTGHTPANGNHLPG). Phosphoserine is present on serine 81. Residues 131–311 (ITLAARLGEA…IKTELSILRA (181 aa)) adopt a coiled-coil conformation. 6 disordered regions span residues 351 to 419 (ALLA…FPSL), 460 to 488 (KPPS…GPEE), 599 to 628 (EIES…STSE), 653 to 676 (ESGP…TASQ), 743 to 769 (YASV…PRGD), and 904 to 977 (LGQG…SSSQ). Positions 374–395 (PPYPPQLPPPPGPEDPLSPSPA) are enriched in pro residues. 2 stretches are compositionally biased toward low complexity: residues 397-408 (PLLGPSLGPDGP) and 460-470 (KPPSAPAASVP). The segment at residues 482-569 (DGAGPEEEQL…VLALRTIQVR (88 aa)) is a DNA-binding region (CUT 1). Positions 587-655 (DAIKSILEQA…QQALLEMESG (69 aa)) form a coiled coil. Polar residues predominate over residues 608–628 (SKNSPASVSIPNGTASSSTSE). 3 stretches are compositionally biased toward low complexity: residues 743–757 (YASV…SSYS), 910–928 (QAPT…EPTS), and 965–976 (SSSLGGKPFSSS). The segment at residues 828–915 (QYELYMYREV…QGQGQAPTQQ (88 aa)) is a DNA-binding region (CUT 2). The segment at residues 983-1070 (QEMVAMSPEL…VEKLRDMKKL (88 aa)) is a DNA-binding region (CUT 3). A DNA-binding region (homeobox) is located at residues 1113-1172 (AKKPRVVLAPAEKEALRKAYQLEPYPSQQTIELLSFQLNLKTNTVINWFHNYRSRMRREM). Residues 1177-1392 (TQDDPDFDPS…AALHPSTKVN (216 aa)) form a disordered region. Composition is skewed to basic and acidic residues over residues 1233-1245 (APDR…KQEE) and 1260-1274 (DPDR…EHTH). Over residues 1318 to 1332 (LSFKSTSESSCCSLE) the composition is skewed to low complexity. Polar residues predominate over residues 1338–1350 (PSVISSPDLTTCV). Over residues 1351–1364 (SPAPSSSAPISPSL) the composition is skewed to low complexity.

The protein belongs to the CUT homeobox family. In terms of tissue distribution, restricted to neural tissues. Expressed exclusively in the central and peripheral nervous systems.

The protein localises to the nucleus. Functionally, transcription factor involved in the control of neuronal proliferation and differentiation in the brain. Regulates dendrite development and branching, dendritic spine formation, and synaptogenesis in cortical layers II-III. Binds to DNA in a sequence-specific manner. The polypeptide is Homeobox protein cut-like 2 (Cux2) (Mus musculus (Mouse)).